Reading from the N-terminus, the 165-residue chain is Protein SprT (165 aa).

One can recognise a SprT-like domain in the interval 22–163; it reads LAQANLKLGR…RCVHCGEQLT (142 aa). Histidine 78 is a binding site for Zn(2+). Glutamate 79 is a catalytic residue. Residue histidine 82 participates in Zn(2+) binding.

The protein belongs to the SprT family. The cofactor is Zn(2+).

It localises to the cytoplasm. This Escherichia fergusonii (strain ATCC 35469 / DSM 13698 / CCUG 18766 / IAM 14443 / JCM 21226 / LMG 7866 / NBRC 102419 / NCTC 12128 / CDC 0568-73) protein is Protein SprT.